A 44-amino-acid chain; its full sequence is Antimicrobial peptide 2 (44 aa).

Disulfide bonds. As to expression, expressed in flowers but not in leaves, seeds or roots (at protein level).

Functionally, antimicrobial peptide. Active against fungal species B.cinerea (IC(50)=5.2 uM), A.niger (IC(50)=2.6 uM) and B.sorokinina (IC(50)=5.2 uM) but not against F.oxysporum, F.graminearum and P.debaryanum at concentrations below 10 uM. Inhibits growth of P.infestans at concentration between 1.3 uM and 5.2 uM. Active against bacterial species P.syringae, B.subtilis, X.campestris and C.michiganense. This chain is Antimicrobial peptide 2, found in Taraxacum officinale (Common dandelion).